The following is a 156-amino-acid chain: 6,7-dimethyl-8-ribityllumazine synthase (156 aa).

Residues Phe-22, 57 to 59, and 81 to 83 each bind 5-amino-6-(D-ribitylamino)uracil; these read AYE and TVI. Position 86–87 (86–87) interacts with (2S)-2-hydroxy-3-oxobutyl phosphate; it reads GT. The active-site Proton donor is His-89. Phe-114 is a 5-amino-6-(D-ribitylamino)uracil binding site. Arg-128 contacts (2S)-2-hydroxy-3-oxobutyl phosphate.

Belongs to the DMRL synthase family. As to quaternary structure, forms an icosahedral capsid composed of 60 subunits, arranged as a dodecamer of pentamers.

It carries out the reaction (2S)-2-hydroxy-3-oxobutyl phosphate + 5-amino-6-(D-ribitylamino)uracil = 6,7-dimethyl-8-(1-D-ribityl)lumazine + phosphate + 2 H2O + H(+). The protein operates within cofactor biosynthesis; riboflavin biosynthesis; riboflavin from 2-hydroxy-3-oxobutyl phosphate and 5-amino-6-(D-ribitylamino)uracil: step 1/2. Its function is as follows. Catalyzes the formation of 6,7-dimethyl-8-ribityllumazine by condensation of 5-amino-6-(D-ribitylamino)uracil with 3,4-dihydroxy-2-butanone 4-phosphate. This is the penultimate step in the biosynthesis of riboflavin. This Yersinia enterocolitica serotype O:8 / biotype 1B (strain NCTC 13174 / 8081) protein is 6,7-dimethyl-8-ribityllumazine synthase.